The sequence spans 291 residues: Nucleotide-binding protein lhv_0732 (291 aa).

Residue 13-20 (GMSGAGKT) participates in ATP binding. 61–64 (DLRV) lines the GTP pocket.

The protein belongs to the RapZ-like family.

Its function is as follows. Displays ATPase and GTPase activities. In Lactobacillus helveticus (strain DPC 4571), this protein is Nucleotide-binding protein lhv_0732.